The primary structure comprises 249 residues: Probable transcriptional regulatory protein GOX1679 (249 aa).

It belongs to the TACO1 family.

It localises to the cytoplasm. The polypeptide is Probable transcriptional regulatory protein GOX1679 (Gluconobacter oxydans (strain 621H) (Gluconobacter suboxydans)).